We begin with the raw amino-acid sequence, 495 residues long: Maturase K (495 aa).

The protein belongs to the intron maturase 2 family. MatK subfamily.

It is found in the plastid. It localises to the chloroplast. Usually encoded in the trnK tRNA gene intron. Probably assists in splicing its own and other chloroplast group II introns. The sequence is that of Maturase K from Torreya californica (California nutmeg).